A 616-amino-acid polypeptide reads, in one-letter code: Chaperone protein HtpG (616 aa).

The interval 1–334 (MTIKQTHSFQ…TADLSLNLSR (334 aa)) is a; substrate-binding. The segment at 335–549 (EILQDNKVIK…ENEMGGNMER (215 aa)) is b. The c stretch occupies residues 550-616 (IMKSLGQDIP…FVKRINKLIN (67 aa)).

This sequence belongs to the heat shock protein 90 family. In terms of assembly, homodimer.

The protein localises to the cytoplasm. Functionally, molecular chaperone. Has ATPase activity. In Vesicomyosocius okutanii subsp. Calyptogena okutanii (strain HA), this protein is Chaperone protein HtpG.